The primary structure comprises 117 residues: Mitochondrial import inner membrane translocase subunit Tim10B (117 aa).

Residues Cys-22–Cys-46 carry the Twin CX3C motif motif. 2 cysteine pairs are disulfide-bonded: Cys-22–Cys-46 and Cys-26–Cys-42. The span at Glu-75–Glu-97 shows a compositional bias: basic and acidic residues. Positions Glu-75–Met-117 are disordered.

It belongs to the small Tim family. In terms of assembly, component of the TIM22 complex, whose core is composed of Tim22, associated with peripheral protein Tim9b/Tim10b and the 70 kDa heterohexamer. In most cases, the 70 kDa complex is composed of TIMM9 and TIMM10.

The protein resides in the mitochondrion inner membrane. Functionally, component of the TIM22 complex, a complex that mediates the import and insertion of multi-pass transmembrane proteins into the mitochondrial inner membrane. The TIM22 complex forms a twin-pore translocase that uses the membrane potential as the external driving force. In the TIM22 complex, it may act as a docking point for the soluble 70 kDa complex that guides the target proteins in transit through the aqueous mitochondrial intermembrane space. The sequence is that of Mitochondrial import inner membrane translocase subunit Tim10B (Tim9b) from Drosophila melanogaster (Fruit fly).